The chain runs to 417 residues: Probable pectate lyase 20 (417 aa).

An N-terminal signal peptide occupies residues 1–25 (MAVTQILVVFASALLLSMFFTGVDS). N-linked (GlcNAc...) asparagine glycans are attached at residues N29 and N53. The Ca(2+) site is built by D215, D239, and D243. R295 is an active-site residue.

The protein belongs to the polysaccharide lyase 1 family. It depends on Ca(2+) as a cofactor.

The enzyme catalyses Eliminative cleavage of (1-&gt;4)-alpha-D-galacturonan to give oligosaccharides with 4-deoxy-alpha-D-galact-4-enuronosyl groups at their non-reducing ends.. It functions in the pathway glycan metabolism; pectin degradation; 2-dehydro-3-deoxy-D-gluconate from pectin: step 2/5. This chain is Probable pectate lyase 20, found in Arabidopsis thaliana (Mouse-ear cress).